Reading from the N-terminus, the 240-residue chain is Glutathione S-transferase theta-1 (240 aa).

Positions 2-82 (VLELYLDLLS…YLAHKYKVPD (81 aa)) constitute a GST N-terminal domain. Glutathione contacts are provided by residues H40, 53–54 (KV), and 66–67 (ES). The 136-residue stretch at 88–223 (DLQARARVDE…ILKVRDCPPA (136 aa)) folds into the GST C-terminal domain.

This sequence belongs to the GST superfamily. Theta family. As to quaternary structure, homodimer. In liver, highest expression found in central vein limiting plate hepatocytes. In lung, expressed mainly in club cells of the bronchiolar epithelium and, at low levels, in type II alveolar cells.

The protein resides in the cytoplasm. The catalysed reaction is RX + glutathione = an S-substituted glutathione + a halide anion + H(+). Conjugation of reduced glutathione to a wide number of exogenous and endogenous hydrophobic electrophiles. Also binds steroids, bilirubin, carcinogens and numerous organic anions. Has dichloromethane dehalogenase activity. The polypeptide is Glutathione S-transferase theta-1 (Gstt1) (Rattus norvegicus (Rat)).